The following is a 306-amino-acid chain: MNAKAAQSLFGAIASSKKAPTREEPAVNFKSTNESLIKKNLQLKQQLSQCTKALEKLRNENIALREQNQELIDATLDEKMERIVEQRVKSRLAHAAVLHKKLVQNIQQTGLELGGIFKDMEPEPSGMVTRRAPKMECNLEKLDESPVRNFPRSDYEEENKSPMDIQNGPSSSSSMTQNLENGTPRMAQRASKGRRSELFHSLHENVPEEAAPAVGYKRAPLLIAPSETPGGPPKKAPPRKAPTPRFKKPSTPAPAPISDDAEMPSTVRRQRSAKMNIKSMKEPSVNSKLRRPGKHDEPMPFIDTFF.

The stretch at 28–75 forms a coiled coil; sequence NFKSTNESLIKKNLQLKQQLSQCTKALEKLRNENIALREQNQELIDAT. Disordered regions lie at residues 122–196 and 223–306; these read PEPS…GRRS and IAPS…DTFF. The segment covering 133 to 161 has biased composition (basic and acidic residues); the sequence is PKMECNLEKLDESPVRNFPRSDYEEENKS. A compositionally biased stretch (polar residues) spans 167-181; the sequence is NGPSSSSSMTQNLEN. A compositionally biased stretch (pro residues) spans 230-241; it reads GGPPKKAPPRKA.

Belongs to the shugoshin family.

The protein resides in the nucleus. Its subcellular location is the chromosome. The protein localises to the centromere. Plays a central role in chromosome cohesion during cell division by preventing premature dissociation of cohesin complex from centromeres after prophase, when most of cohesin complex dissociates from chromosomes arms. The sequence is that of Shugoshin (sgo-1) from Caenorhabditis briggsae.